Here is a 127-residue protein sequence, read N- to C-terminus: Holo-[acyl-carrier-protein] synthase (127 aa).

Mg(2+)-binding residues include D8 and E59.

This sequence belongs to the P-Pant transferase superfamily. AcpS family. The cofactor is Mg(2+).

The protein resides in the cytoplasm. It carries out the reaction apo-[ACP] + CoA = holo-[ACP] + adenosine 3',5'-bisphosphate + H(+). In terms of biological role, transfers the 4'-phosphopantetheine moiety from coenzyme A to a Ser of acyl-carrier-protein. This is Holo-[acyl-carrier-protein] synthase from Rickettsia bellii (strain OSU 85-389).